Here is a 216-residue protein sequence, read N- to C-terminus: Ribosomal RNA small subunit methyltransferase G (216 aa).

S-adenosyl-L-methionine-binding positions include Gly73, Leu78, 124–125, and Arg139; that span reads AE.

This sequence belongs to the methyltransferase superfamily. RNA methyltransferase RsmG family.

The protein resides in the cytoplasm. Specifically methylates the N7 position of guanine in position 518 of 16S rRNA. In Paenarthrobacter aurescens (strain TC1), this protein is Ribosomal RNA small subunit methyltransferase G.